The primary structure comprises 243 residues: Phosphoribosyl isomerase A (243 aa).

Aspartate 10 acts as the Proton acceptor in catalysis. The Proton donor role is filled by aspartate 129.

The protein belongs to the HisA/HisF family.

It localises to the cytoplasm. The enzyme catalyses 1-(5-phospho-beta-D-ribosyl)-5-[(5-phospho-beta-D-ribosylamino)methylideneamino]imidazole-4-carboxamide = 5-[(5-phospho-1-deoxy-D-ribulos-1-ylimino)methylamino]-1-(5-phospho-beta-D-ribosyl)imidazole-4-carboxamide. The catalysed reaction is N-(5-phospho-beta-D-ribosyl)anthranilate = 1-(2-carboxyphenylamino)-1-deoxy-D-ribulose 5-phosphate. It participates in amino-acid biosynthesis; L-histidine biosynthesis; L-histidine from 5-phospho-alpha-D-ribose 1-diphosphate: step 4/9. The protein operates within amino-acid biosynthesis; L-tryptophan biosynthesis; L-tryptophan from chorismate: step 3/5. Its function is as follows. Involved in both the histidine and tryptophan biosynthetic pathways. The sequence is that of Phosphoribosyl isomerase A from Mycobacteroides abscessus (strain ATCC 19977 / DSM 44196 / CCUG 20993 / CIP 104536 / JCM 13569 / NCTC 13031 / TMC 1543 / L948) (Mycobacterium abscessus).